The sequence spans 156 residues: Small ribosomal subunit protein uS7 (156 aa).

The protein belongs to the universal ribosomal protein uS7 family. In terms of assembly, part of the 30S ribosomal subunit. Contacts proteins S9 and S11.

Its function is as follows. One of the primary rRNA binding proteins, it binds directly to 16S rRNA where it nucleates assembly of the head domain of the 30S subunit. Is located at the subunit interface close to the decoding center, probably blocks exit of the E-site tRNA. This is Small ribosomal subunit protein uS7 from Clostridium acetobutylicum (strain ATCC 824 / DSM 792 / JCM 1419 / IAM 19013 / LMG 5710 / NBRC 13948 / NRRL B-527 / VKM B-1787 / 2291 / W).